The chain runs to 274 residues: Penicillin-insensitive murein endopeptidase (274 aa).

The signal sequence occupies residues 1–19 (MKKTVIALLAWFVSSASLA). Disulfide bonds link Cys44/Cys265, Cys187/Cys235, and Cys216/Cys223. Residues His110, His113, Asp120, Asp147, His150, and His211 each contribute to the Zn(2+) site. The segment at 225-274 (DQPLPPPGDGCGAELQSWFEPPKPGTTKPEKKTPPPLPPSCQALLDEHVL) is disordered.

Belongs to the peptidase M74 family. In terms of assembly, dimer. Requires Zn(2+) as cofactor.

The protein resides in the periplasm. Functionally, murein endopeptidase that cleaves the D-alanyl-meso-2,6-diamino-pimelyl amide bond that connects peptidoglycan strands. Likely plays a role in the removal of murein from the sacculus. This chain is Penicillin-insensitive murein endopeptidase, found in Salmonella paratyphi C (strain RKS4594).